Consider the following 236-residue polypeptide: Putative protein ZBED10P (236 aa).

In Homo sapiens (Human), this protein is Putative protein ZBED10P.